Here is a 421-residue protein sequence, read N- to C-terminus: Gamma-glutamyl phosphate reductase (421 aa).

Belongs to the gamma-glutamyl phosphate reductase family.

It is found in the cytoplasm. The catalysed reaction is L-glutamate 5-semialdehyde + phosphate + NADP(+) = L-glutamyl 5-phosphate + NADPH + H(+). It participates in amino-acid biosynthesis; L-proline biosynthesis; L-glutamate 5-semialdehyde from L-glutamate: step 2/2. Its function is as follows. Catalyzes the NADPH-dependent reduction of L-glutamate 5-phosphate into L-glutamate 5-semialdehyde and phosphate. The product spontaneously undergoes cyclization to form 1-pyrroline-5-carboxylate. This is Gamma-glutamyl phosphate reductase from Acinetobacter baumannii (strain ACICU).